An 826-amino-acid polypeptide reads, in one-letter code: Dolichyl-diphosphooligosaccharide--protein glycosyltransferase subunit STT3B (826 aa).

Positions 1 to 60 are disordered; it reads MAEPSAPESKHKSSLNSSPWSGLMALGNSRHGHHGPGAQCAHKAAGGAAPPKPAPAGLSG. An N-acetylalanine modification is found at alanine 2. Residues 2 to 41 lie on the Cytoplasmic side of the membrane; sequence AEPSAPESKHKSSLNSSPWSGLMALGNSRHGHHGPGAQCA. Phosphoserine occurs at positions 13, 18, and 29. The span at 37 to 49 shows a compositional bias: low complexity; the sequence is GAQCAHKAAGGAA. A helical transmembrane segment spans residues 42 to 86; it reads HKAAGGAAPPKPAPAGLSGGLSQPAGWQSLLSFTILFLAWLAGFS. The Lumenal segment spans residues 87–173; sequence SRLFAVIRFE…VHIRDVCVFL (87 aa). The short motif at 101-103 is the DXD motif 1 element; sequence EFD. Position 103 (aspartate 103) interacts with Mn(2+). The chain crosses the membrane as a helical span at residues 174–192; it reads APTFSGLTSISTFLLTREL. At 193-194 the chain is on the cytoplasmic side; the sequence is WN. The helical transmembrane segment at 195–212 threads the bilayer; sequence QGAGLLAACFIAIVPGYI. The Lumenal portion of the chain corresponds to 213-223; that stretch reads SRSVAGSFDNE. Mn(2+)-binding residues include aspartate 221 and glutamate 223. A DXD motif 2 motif is present at residues 221–223; that stretch reads DNE. The helical transmembrane segment at 224–243 threads the bilayer; it reads GIAIFALQFTYYLWVKSVKT. Topologically, residues 244 to 245 are cytoplasmic; that stretch reads GS. Residues 246 to 260 traverse the membrane as a helical segment; it reads VFWTMCCCLSYFYMV. Topologically, residues 261-265 are lumenal; sequence SAWGG. Residues 266-282 form a helical membrane-spanning segment; the sequence is YVFIINLIPLHVFVLLL. The Cytoplasmic segment spans residues 283 to 287; it reads MQRYS. The chain crosses the membrane as a helical span at residues 288 to 313; sequence KRVYIAYSTFYIVGLILSMQIPFVGF. Topologically, residues 314 to 321 are lumenal; that stretch reads QPIRTSEH. A helical transmembrane segment spans residues 322–341; it reads MAAAGVFALLQAYAFLQYLR. Residues 342-350 lie on the Cytoplasmic side of the membrane; that stretch reads DRLTKQEFQ. A helical transmembrane segment spans residues 351–371; it reads TLFFLGVSLAAGAVFLSVIYL. Topologically, residues 372 to 410 are lumenal; that stretch reads TYTGYIAPWSGRFYSLWDTGYAKIHIPIIASVSEHQPTT. The short motif at 402–405 is the SVSE motif element; it reads SVSE. Residues 411-433 traverse the membrane as a helical segment; the sequence is WVSFFFDLHILVCTFPAGLWFCI. Residues 434 to 439 lie on the Cytoplasmic side of the membrane; that stretch reads KNINDE. The helical transmembrane segment at 440 to 456 threads the bilayer; sequence RVFVALYAISAVYFAGV. The Lumenal segment spans residues 457 to 460; the sequence is MVRL. Residue arginine 459 coordinates dolichyl diphosphooligosaccharide. The chain crosses the membrane as a helical span at residues 461-482; sequence MLTLTPVVCMLSAIAFSNVFEH. The Cytoplasmic portion of the chain corresponds to 483–526; the sequence is YLGDDMKRENPPVEDSSDEDDKRNQGNLYDKAGKVRKHATEQEK. The tract at residues 490–509 is disordered; that stretch reads RENPPVEDSSDEDDKRNQGN. A phosphoserine mark is found at serine 498 and serine 499. The chain crosses the membrane as a helical span at residues 527 to 552; sequence TEEGLGPNIKSIVTMLMLMLLMMFAV. At 553–826 the chain is on the lumenal side; it reads HCTWVTSNAY…KGKKISKKTV (274 aa). Positions 604 to 606 are interacts with target acceptor peptide in protein substrate; it reads WWD. The WWDYG motif signature appears at 604–608; sequence WWDYG. Tyrosine 609 is a dolichyl diphosphooligosaccharide binding site. 2 N-linked (GlcNAc...) asparagine glycosylation sites follow: asparagine 616 and asparagine 623. The N-linked (GlcNAc...) (high mannose) asparagine glycan is linked to asparagine 627. N-linked (GlcNAc...) asparagine glycosylation occurs at asparagine 641. The short motif at 671-678 is the DK motif element; it reads DINKFLWM.

The protein belongs to the STT3 family. As to quaternary structure, component of the oligosaccharyltransferase (OST) complex. There are 2 OST complexes, OST-A and OST-B, which contain STT3A or STT3B as catalytic subunit, respectively. OST-A and OST-B contain common core subunits RPN1, RPN2, OST48, OST4, DAD1 and TMEM258, and OST-B contains either MAGT1 or TUSC3 as specific accessory subunit. Requires Mg(2+) as cofactor. Mn(2+) serves as cofactor. Expressed in heart, brain, placenta, lung, liver, muscle, kidney and pancreas. Expressed in skin fibroblasts (at protein level).

The protein localises to the endoplasmic reticulum. It is found in the endoplasmic reticulum membrane. It carries out the reaction a di-trans,poly-cis-dolichyl diphosphooligosaccharide + L-asparaginyl-[protein] = N(4)-(oligosaccharide-(1-&gt;4)-N-acetyl-beta-D-glucosaminyl-(1-&gt;4)-N-acetyl-beta-D-glucosaminyl)-L-asparaginyl-[protein] + a di-trans,poly-cis-dolichyl diphosphate + H(+). Its pathway is protein modification; protein glycosylation. In terms of biological role, catalytic subunit of the oligosaccharyl transferase (OST) complex that catalyzes the initial transfer of a defined glycan (Glc(3)Man(9)GlcNAc(2) in eukaryotes) from the lipid carrier dolichol-pyrophosphate to an asparagine residue within an Asn-X-Ser/Thr consensus motif in nascent polypeptide chains, the first step in protein N-glycosylation. N-glycosylation occurs cotranslationally and the complex associates with the Sec61 complex at the channel-forming translocon complex that mediates protein translocation across the endoplasmic reticulum (ER). All subunits are required for a maximal enzyme activity. This subunit contains the active site and the acceptor peptide and donor lipid-linked oligosaccharide (LLO) binding pockets. STT3B is present in a small subset of OST complexes (OST-B) and mediates both cotranslational and post-translational N-glycosylation of target proteins: STT3B-containing complexes are required for efficient post-translational glycosylation and while they are less competent than STT3A-containing complexes for cotranslational glycosylation, they have the ability to mediate glycosylation of some nascent sites that are not accessible for STT3A. STT3B-containing complexes also act post-translationally and mediate modification of skipped glycosylation sites in unfolded proteins. Plays a role in ER-associated degradation (ERAD) pathway that mediates ubiquitin-dependent degradation of misfolded endoplasmic reticulum proteins by mediating N-glycosylation of unfolded proteins, which are then recognized by the ERAD pathway and targeted for degradation. Mediates glycosylation of the disease variant AMYL-TTR 'Asp-38' of TTR at 'Asn-118', leading to its degradation. The sequence is that of Dolichyl-diphosphooligosaccharide--protein glycosyltransferase subunit STT3B from Homo sapiens (Human).